Consider the following 125-residue polypeptide: Large ribosomal subunit protein bL12 (125 aa).

It belongs to the bacterial ribosomal protein bL12 family. In terms of assembly, homodimer. Part of the ribosomal stalk of the 50S ribosomal subunit. Forms a multimeric L10(L12)X complex, where L10 forms an elongated spine to which 2 to 4 L12 dimers bind in a sequential fashion. Binds GTP-bound translation factors.

Functionally, forms part of the ribosomal stalk which helps the ribosome interact with GTP-bound translation factors. Is thus essential for accurate translation. The sequence is that of Large ribosomal subunit protein bL12 from Hyphomonas neptunium (strain ATCC 15444).